Consider the following 303-residue polypeptide: Crk-like protein (303 aa).

The SH2 domain maps to 14–102 (WYMGPVTRQE…LDTTTLIEPA (89 aa)). The SH3 1 domain maps to 123 to 183 (ENLEYVRTLY…PVPYVEKLVR (61 aa)). Tyr-127 bears the Phosphotyrosine mark. The disordered stretch occupies residues 184-203 (SSPHGKHGNRNSNSYGIPEP). The residue at position 207 (Tyr-207) is a Phosphotyrosine. An SH3 2 domain is found at 235–296 (NGPVFAKAIQ…PFTHVKIFDP (62 aa)).

This sequence belongs to the CRK family. Interacts with DOCK2 and EPOR. Interacts with phosphorylated CBLB and IRS4. Interacts with INPP5D/SHIP1. Interacts with BCAR1/CAS and NEDD9/HEF1. Phosphorylated on tyrosine. Phosphorylation is prominent during early development, but decreases at later embryonic stages and in newborn mice.

Functionally, may mediate the transduction of intracellular signals. In Mus musculus (Mouse), this protein is Crk-like protein (Crkl).